Reading from the N-terminus, the 647-residue chain is uncharacterized protein (647 aa).

This is an uncharacterized protein from Cryphonectria parasitica mycoreovirus 1 (strain 9B21) (CpMYRV-1).